We begin with the raw amino-acid sequence, 138 residues long: Large-conductance mechanosensitive channel (138 aa).

Helical transmembrane passes span 15–35 (VDLAIGVIIGGAFGGLVNSIV), 38–58 (IIMPIIGLITGGIDFSNMFIQ), and 80–100 (GNFITLLINFLIIAWVLFLVV).

The protein belongs to the MscL family. Homopentamer.

It localises to the cell inner membrane. Functionally, channel that opens in response to stretch forces in the membrane lipid bilayer. May participate in the regulation of osmotic pressure changes within the cell. The protein is Large-conductance mechanosensitive channel of Brucella canis (strain ATCC 23365 / NCTC 10854 / RM-666).